The primary structure comprises 640 residues: Chaperone protein HtpG (640 aa).

The tract at residues 1–352 (MTEQTATQNY…SADLPLNVSR (352 aa)) is a; substrate-binding. Positions 353–571 (ELLQESRDVK…DGELSPQLIR (219 aa)) are b. Positions 572–640 (MLKQAGQAVP…VKRINSLLLK (69 aa)) are c.

It belongs to the heat shock protein 90 family. As to quaternary structure, homodimer.

Its subcellular location is the cytoplasm. Molecular chaperone. Has ATPase activity. This Acinetobacter baylyi (strain ATCC 33305 / BD413 / ADP1) protein is Chaperone protein HtpG.